Reading from the N-terminus, the 264-residue chain is Small ribosomal subunit protein uS3 (264 aa).

The 69-residue stretch at 39 to 107 (VREYLKKKLK…PVHVNIEEIR (69 aa)) folds into the KH type-2 domain. The interval 214-264 (PVETAAPREEERRPRRAPRGDRPDGARNGRPGGGRGRAPRKADAAPAPEGE) is disordered. Residues 219–240 (APREEERRPRRAPRGDRPDGAR) are compositionally biased toward basic and acidic residues.

This sequence belongs to the universal ribosomal protein uS3 family. As to quaternary structure, part of the 30S ribosomal subunit. Forms a tight complex with proteins S10 and S14.

Functionally, binds the lower part of the 30S subunit head. Binds mRNA in the 70S ribosome, positioning it for translation. This is Small ribosomal subunit protein uS3 from Bordetella avium (strain 197N).